We begin with the raw amino-acid sequence, 708 residues long: E3 ubiquitin-protein ligase RNF169 (708 aa).

Low complexity-rich tracts occupy residues 1–20 (MAAA…AALS) and 33–53 (AAKT…LSPP). 3 disordered regions span residues 1-71 (MAAA…CAGC), 96-169 (ADAA…EPDF), and 195-262 (EEKL…MTQT). Serine 12 carries the phosphoserine modification. Residues 68-107 (CAGCLEPPGEAAALPCGHSLCRGCAQRAADAAGPGCPRCR) form an RING-type zinc finger. A compositionally biased stretch (basic and acidic residues) spans 132 to 147 (CARRSQPERCRPRRDG). Over residues 148 to 167 (GAAAAGPRPEQEPRAAPAEP) the composition is skewed to low complexity. Basic and acidic residues predominate over residues 195–243 (EEKLQEEKPSEDQIHKLLPEDTETGKRKMDEQKKRDEPLVLKTNLERCP). Residues 205 to 213 (EDQIHKLLP) carry the UMI motif motif. Serine 247 and serine 249 each carry phosphoserine. Lysine 286 is covalently cross-linked (Glycyl lysine isopeptide (Lys-Gly) (interchain with G-Cter in SUMO2)). Position 339 is a phosphoserine (serine 339). Lysine 362 participates in a covalent cross-link: Glycyl lysine isopeptide (Lys-Gly) (interchain with G-Cter in SUMO2). 3 positions are modified to phosphoserine: serine 368, serine 403, and serine 409. Residue threonine 410 is modified to Phosphothreonine. Position 485 is a phosphoserine (serine 485). A disordered region spans residues 491 to 555 (SEYTGPTSAD…EQFEGLGSTP (65 aa)). A Glycyl lysine isopeptide (Lys-Gly) (interchain with G-Cter in SUMO2) cross-link involves residue lysine 511. Threonine 554 bears the Phosphothreonine mark. At serine 644 the chain carries Phosphoserine. The MIU motif motif lies at 665-682 (QEEEDRQLALQLQRMFDN). The LR motif signature appears at 689–701 (RRKGSVDQYLLRS). Serine 693 is modified (phosphoserine).

It belongs to the RNF169 family. In terms of assembly, interacts with DYRK1B. Post-translationally, phosphorylated by DYRK1A; phosphorylation increases RNF169 ability to block accumulation of TP53BP1 at the DSB sites.

It localises to the chromosome. It is found in the nucleus. The protein resides in the nucleoplasm. The enzyme catalyses S-ubiquitinyl-[E2 ubiquitin-conjugating enzyme]-L-cysteine + [acceptor protein]-L-lysine = [E2 ubiquitin-conjugating enzyme]-L-cysteine + N(6)-ubiquitinyl-[acceptor protein]-L-lysine.. The protein operates within protein modification; protein ubiquitination. In terms of biological role, probable E3 ubiquitin-protein ligase that acts as a regulator of double-strand breaks (DSBs) repair following DNA damage. Functions in a non-canonical fashion to harness RNF168-mediated protein recruitment to DSB-containing chromatin, thereby contributing to regulation of DSB repair pathway utilization. Once recruited to DSB repair sites by recognizing and binding ubiquitin catalyzed by RNF168, competes with TP53BP1 and BRCA1 for association with RNF168-modified chromatin, thereby favouring homologous recombination repair (HRR) and single-strand annealing (SSA) instead of non-homologous end joining (NHEJ) mediated by TP53BP1. E3 ubiquitin-protein ligase activity is not required for regulation of DSBs repair. The chain is E3 ubiquitin-protein ligase RNF169 (RNF169) from Homo sapiens (Human).